A 262-amino-acid chain; its full sequence is Glycerol uptake facilitator protein (262 aa).

Residues 1–7 (MNFCSKK) lie on the Cytoplasmic side of the membrane. A helical transmembrane segment spans residues 8-36 (KILKQCFFEFLGTGLIIFLGISSLVVSKL). Residues 37-41 (TNFHF) are Extracellular-facing. The helical transmembrane segment at 42–62 (NHCEISCIWGLGVFISICFCS) threads the bilayer. Residues 63–65 (SVS) lie on the Cytoplasmic side of the membrane. The stretch at 66-69 (GAHL) is an intramembrane region. The short motif at 70 to 72 (NPA) is the NPA 1 element. The helical intramembrane region spans 70-80 (NPAITIFLFLS). The Cytoplasmic segment spans residues 81 to 86 (SQFNKK). The helical transmembrane segment at 87–110 (KVIPYILSQISGTFFFTFLIYLIF) threads the bilayer. Over 111-145 (NNLLNSFESKYNIVRGTKKSLELASLFCVFPKENY) the chain is Extracellular. The helical transmembrane segment at 146–171 (NFIHDFILEILIGIIFIIILMKLSEK) threads the bilayer. At 172–180 (NNLFKFYKF) the chain is on the cytoplasmic side. Residues 181–197 (INPFLIGTLVIIINLFL) traverse the membrane as a helical segment. The Extracellular portion of the chain corresponds to 198–201 (TSYS). An intramembrane segment occupies 202–205 (NITL). Residues 206 to 208 (NPA) carry the NPA 2 motif. The segment at residues 206-219 (NPARDLGPRIFLSL) is an intramembrane region (helical). Topologically, residues 220–234 (IGWGKLAFTGDDNII) are extracellular. Residues 235-259 (FPYFLIPTIAPIIGINLGGWIYILY) form a helical membrane-spanning segment. Residues 260-262 (IKK) are Cytoplasmic-facing.

This sequence belongs to the MIP/aquaporin (TC 1.A.8) family.

The protein localises to the cell membrane. It catalyses the reaction glycerol(in) = glycerol(out). Functionally, mediates glycerol diffusion across the cytoplasmic membrane via a pore-type mechanism. The polypeptide is Glycerol uptake facilitator protein (glpF) (Buchnera aphidicola subsp. Schizaphis graminum (strain Sg)).